The primary structure comprises 543 residues: CTP synthase (543 aa).

The tract at residues 1-265 (MARYIFITGG…DEEVLAAFGI (265 aa)) is amidoligase domain. Ser-13 provides a ligand contact to CTP. Ser-13 serves as a coordination point for UTP. 14–19 (SLGKGL) contributes to the ATP binding site. Residue Tyr-54 coordinates L-glutamine. Asp-71 contacts ATP. Positions 71 and 139 each coordinate Mg(2+). Residues 146–148 (DIE), 186–191 (KTKPTQ), and Lys-222 each bind CTP. Residues 186–191 (KTKPTQ) and Lys-222 each bind UTP. 238–240 (RDA) contributes to the ATP binding site. The Glutamine amidotransferase type-1 domain occupies 291 to 542 (TIAIVGKYTG…IEAAMAQSRL (252 aa)). Gly-353 contacts L-glutamine. The Nucleophile; for glutamine hydrolysis role is filled by Cys-380. Residues 381 to 384 (FGMQ), Glu-404, and Arg-470 each bind L-glutamine. Catalysis depends on residues His-515 and Glu-517.

Belongs to the CTP synthase family. As to quaternary structure, homotetramer.

It carries out the reaction UTP + L-glutamine + ATP + H2O = CTP + L-glutamate + ADP + phosphate + 2 H(+). It catalyses the reaction L-glutamine + H2O = L-glutamate + NH4(+). The enzyme catalyses UTP + NH4(+) + ATP = CTP + ADP + phosphate + 2 H(+). It functions in the pathway pyrimidine metabolism; CTP biosynthesis via de novo pathway; CTP from UDP: step 2/2. Allosterically activated by GTP, when glutamine is the substrate; GTP has no effect on the reaction when ammonia is the substrate. The allosteric effector GTP functions by stabilizing the protein conformation that binds the tetrahedral intermediate(s) formed during glutamine hydrolysis. Inhibited by the product CTP, via allosteric rather than competitive inhibition. Catalyzes the ATP-dependent amination of UTP to CTP with either L-glutamine or ammonia as the source of nitrogen. Regulates intracellular CTP levels through interactions with the four ribonucleotide triphosphates. This Rhodopseudomonas palustris (strain BisA53) protein is CTP synthase.